Reading from the N-terminus, the 147-residue chain is Large ribosomal subunit protein uL16 (147 aa).

The interval 1–20 (MLMPKKVKHRKVQRGRMKGK) is disordered.

This sequence belongs to the universal ribosomal protein uL16 family. Part of the 50S ribosomal subunit.

In terms of biological role, binds 23S rRNA and is also seen to make contacts with the A and possibly P site tRNAs. The sequence is that of Large ribosomal subunit protein uL16 from Clostridium kluyveri (strain ATCC 8527 / DSM 555 / NBRC 12016 / NCIMB 10680 / K1).